The following is a 1959-amino-acid chain: Myosin-9 (1959 aa).

The region spanning 27–77 (AAKKLVWVPSEKSGFEAASLKEEVGDEAIVELAENGKKVKVNKDDIQKMNP) is the Myosin N-terminal SH3-like domain. The Myosin motor domain maps to 81–776 (SKVEDMAELT…VLAHLEEERD (696 aa)). 174–181 (GESGAGKT) provides a ligand contact to ATP. The tract at residues 654 to 676 (LAKLMATLRNTNPNFVRCIIPNH) is actin-binding. Positions 779 to 808 (ITDVIIGFQACCRGYLARKAFAKRQQQLTA) constitute an IQ domain. A coiled-coil region spans residues 837–1925 (LLQVSRQEEE…LKSKLRRGDL (1089 aa)). Disordered regions lie at residues 1118–1168 (EDLE…REQE), 1694–1717 (RAKRQAQQERDELADEIANSSGKG), 1879–1917 (LEEAEEEAQRANVRRKLQRELDDATETADAMNREVSSLK), and 1936–1959 (KGTGECSDEEVDGKAEAGDAKATE). Basic and acidic residues-rich tracts occupy residues 1122-1148 (SERASRNKAEKQKRDLGEELEALKTEL) and 1694-1704 (RAKRQAQQERD). Positions 1947–1959 (DGKAEAGDAKATE) are enriched in basic and acidic residues.

It belongs to the TRAFAC class myosin-kinesin ATPase superfamily. Myosin family. In terms of assembly, myosin is a hexameric protein that consists of 2 heavy chain subunits (MHC), 2 alkali light chain subunits (MLC) and 2 regulatory light chain subunits (MLC-2). In terms of tissue distribution, expressed in fibroblasts, brain, lung, kidney, spleen, and skeletal, cardiac and smooth muscles.

The protein localises to the cytoplasm. It localises to the cytoskeleton. Its subcellular location is the cell cortex. The protein resides in the cytoplasmic vesicle. It is found in the secretory vesicle. The protein localises to the cortical granule. Its function is as follows. Cellular myosin that appears to play a role in cytokinesis, cell shape, and specialized functions such as secretion and capping. The protein is Myosin-9 (MYH9) of Gallus gallus (Chicken).